Consider the following 530-residue polypeptide: 5-aminolevulinate synthase, mitochondrial (530 aa).

Residues 1–26 (MFRPVLKVRPSFSYPYSIVSSRSVRL) constitute a mitochondrion transit peptide. Residues Arg73, Ser186, and Lys205 each contribute to the substrate site. Residues Ser238, His266, and Thr316 each coordinate pyridoxal 5'-phosphate. The active site involves Lys319. Lys319 bears the N6-(pyridoxal phosphate)lysine mark. Residues Thr348 and Thr349 each coordinate pyridoxal 5'-phosphate. Residue Thr434 participates in substrate binding.

It belongs to the class-II pyridoxal-phosphate-dependent aminotransferase family. Homodimer. The cofactor is pyridoxal 5'-phosphate.

Its subcellular location is the mitochondrion matrix. The enzyme catalyses succinyl-CoA + glycine + H(+) = 5-aminolevulinate + CO2 + CoA. The protein operates within porphyrin-containing compound metabolism; protoporphyrin-IX biosynthesis; 5-aminolevulinate from glycine: step 1/1. Its function is as follows. Catalyzes the synthesis of 5-aminolevulinate (ALA) from succinyl-CoA and glycine, the first and rate-limiting step in heme biosynthesis. This is 5-aminolevulinate synthase, mitochondrial (HEM1) from Candida glabrata (strain ATCC 2001 / BCRC 20586 / JCM 3761 / NBRC 0622 / NRRL Y-65 / CBS 138) (Yeast).